Consider the following 378-residue polypeptide: Putative gustatory receptor 22f (378 aa).

The Cytoplasmic segment spans residues 1–13; the sequence is MKMFQPRRGFSCH. A helical membrane pass occupies residues 14-34; the sequence is LAWFMLQTTLYASWLLGLFPF. Residues 35 to 48 are Extracellular-facing; that stretch reads TFDSRRKQLKRSRW. Residues 49-69 form a helical membrane-spanning segment; it reads LLLYGFVLHSLAMCLAMSSHL. The Cytoplasmic portion of the chain corresponds to 70 to 88; sequence ASKQRRKYNAFERNPLLEK. A helical membrane pass occupies residues 89 to 109; sequence IYMQFQVTTFFTISVLLLMNV. Topologically, residues 110-143 are extracellular; that stretch reads WKSNTVRKIANELLTLEGQVKDLLTLKNCPNFNC. A helical membrane pass occupies residues 144–164; sequence FVIKKHVAAIGQFVISIYFCL. Over 165 to 178 the chain is Cytoplasmic; the sequence is CQENSYPKILKILC. A helical membrane pass occupies residues 179–199; it reads CLPSVGLQLIIMHFHTEIILV. The Extracellular portion of the chain corresponds to 200 to 245; the sequence is YRYVWLVNETLEDSHHLSSSRIHALASLYDRLLKLSELVVACNDLQ. N-linked (GlcNAc...) asparagine glycosylation is present at Asn-207. The chain crosses the membrane as a helical span at residues 246–266; sequence LILMLIIYLIGNTVQIFFLIV. Residues 267–354 lie on the Cytoplasmic side of the membrane; it reads LGVSMNKRYI…LCGLFSINHN (88 aa). The chain crosses the membrane as a helical span at residues 355-375; that stretch reads MGFQMIITSFLYLVYLLQFDF. The Extracellular portion of the chain corresponds to 376 to 378; that stretch reads MNL.

Belongs to the insect chemoreceptor superfamily. Gustatory receptor (GR) family. Gr22e subfamily. As to expression, taste bristles in the foreleg and labial palps.

It localises to the cell membrane. Functionally, probable gustatory receptor which mediates acceptance or avoidance behavior, depending on its substrates. The chain is Putative gustatory receptor 22f (Gr22f) from Drosophila melanogaster (Fruit fly).